The primary structure comprises 143 residues: Large ribosomal subunit protein uL15 (143 aa).

Composition is skewed to basic residues over residues 1 to 14 (MIRK…KRGS) and 23 to 38 (KKHR…GNAG). The disordered stretch occupies residues 1–38 (MIRKSKKITKKRGSRTCGYGEAKKHRGAGHRGGRGNAG).

Belongs to the universal ribosomal protein uL15 family. Part of the 50S ribosomal subunit.

Binds to the 23S rRNA. The protein is Large ribosomal subunit protein uL15 of Methanococcus maripaludis (strain DSM 14266 / JCM 13030 / NBRC 101832 / S2 / LL).